A 351-amino-acid polypeptide reads, in one-letter code: DNA polymerase IV (351 aa).

The UmuC domain maps to 4–185 (IIHVDMDCFF…LPLAKIPGVG (182 aa)). Positions 8 and 103 each coordinate Mg(2+). The active site involves glutamate 104.

The protein belongs to the DNA polymerase type-Y family. Monomer. Requires Mg(2+) as cofactor.

It localises to the cytoplasm. It catalyses the reaction DNA(n) + a 2'-deoxyribonucleoside 5'-triphosphate = DNA(n+1) + diphosphate. Functionally, poorly processive, error-prone DNA polymerase involved in untargeted mutagenesis. Copies undamaged DNA at stalled replication forks, which arise in vivo from mismatched or misaligned primer ends. These misaligned primers can be extended by PolIV. Exhibits no 3'-5' exonuclease (proofreading) activity. May be involved in translesional synthesis, in conjunction with the beta clamp from PolIII. The chain is DNA polymerase IV from Escherichia coli O1:K1 / APEC.